The chain runs to 417 residues: Phosphoglycerate kinase (417 aa).

Positions 23, 24, 25, 26, 38, 39, 62, 63, 65, 66, 121, 122, 169, and 170 each coordinate (2R)-3-phosphoglycerate. Glycine 213 lines the ADP pocket. Glycine 213 provides a ligand contact to CDP. Residues alanine 214 and lysine 215 each contribute to the AMP site. Residue alanine 214 participates in ATP binding. Alanine 214 serves as a coordination point for Mg(2+). Aspartate 218 contacts CDP. Residue aspartate 218 coordinates Mg(2+). Lysine 219 is a binding site for AMP. Lysine 219 is an ATP binding site. Glycine 237 serves as a coordination point for ADP. Residue glycine 237 coordinates CDP. The AMP site is built by glycine 238 and glycine 312. ATP-binding residues include glycine 238 and glycine 312. 2 residues coordinate CDP: glycine 337 and phenylalanine 342. Residue phenylalanine 342 participates in ADP binding. Position 343 (glutamate 343) interacts with AMP. Positions 343, 374, and 375 each coordinate ATP. Aspartate 374 provides a ligand contact to Mg(2+).

Belongs to the phosphoglycerate kinase family. Monomer. It depends on Mg(2+) as a cofactor.

The protein resides in the cytoplasm. It is found in the mitochondrion. The enzyme catalyses (2R)-3-phosphoglycerate + ATP = (2R)-3-phospho-glyceroyl phosphate + ADP. Its pathway is carbohydrate degradation; glycolysis; pyruvate from D-glyceraldehyde 3-phosphate: step 2/5. In terms of biological role, catalyzes one of the two ATP producing reactions in the glycolytic pathway via the reversible conversion of 1,3-diphosphoglycerate to 3-phosphoglycerate. Both L- and D- forms of purine and pyrimidine nucleotides can be used as substrates, but the activity is much lower on pyrimidines. Negatively regulates the biosynthesis of acetyl-CoA from pyruvate in the mitochondrion. The sequence is that of Phosphoglycerate kinase (PGK1) from Candida maltosa (Yeast).